A 152-amino-acid chain; its full sequence is Large ribosomal subunit protein bL9 (152 aa).

It belongs to the bacterial ribosomal protein bL9 family.

Functionally, binds to the 23S rRNA. The chain is Large ribosomal subunit protein bL9 from Corynebacterium urealyticum (strain ATCC 43042 / DSM 7109).